The following is a 498-amino-acid chain: Angiopoietin-1 (498 aa).

The signal sequence occupies residues 1–15 (MTVFLSFAFLAAILT). Residues 81–119 (QKLQHLEHVMENYTQWLQKLENYIVENMKSEMAQIQQNA) are a coiled coil. Residues Asn-92, Asn-122, Asn-154, Asn-243, and Asn-295 are each glycosylated (N-linked (GlcNAc...) asparagine). A coiled-coil region spans residues 153 to 261 (LNQTSRLEIQ…LELMDTVHNL (109 aa)). In terms of domain architecture, Fibrinogen C-terminal spans 277–497 (REEEKPFRDC…STTMMIRPLD (221 aa)). 2 cysteine pairs are disulfide-bonded: Cys-286–Cys-315 and Cys-439–Cys-452.

In terms of assembly, homooligomer. Interacts with TEK/TIE2. Interacts with SVEP1/polydom. Interacts with THBD; this interaction significantly inhibits the generation of activated PC and TAFIa/CPB2 by the thrombin/thrombomodulin complex. In terms of processing, glycosylated.

The protein localises to the secreted. Functionally, binds and activates TEK/TIE2 receptor by inducing its dimerization and tyrosine phosphorylation. Plays an important role in the regulation of angiogenesis, endothelial cell survival, proliferation, migration, adhesion and cell spreading, reorganization of the actin cytoskeleton, but also maintenance of vascular quiescence. Required for normal angiogenesis and heart development during embryogenesis. After birth, activates or inhibits angiogenesis, depending on the context. Inhibits angiogenesis and promotes vascular stability in quiescent vessels, where endothelial cells have tight contacts. In quiescent vessels, ANGPT1 oligomers recruit TEK to cell-cell contacts, forming complexes with TEK molecules from adjoining cells, and this leads to preferential activation of phosphatidylinositol 3-kinase and the AKT1 signaling cascades. In migrating endothelial cells that lack cell-cell adhesions, ANGT1 recruits TEK to contacts with the extracellular matrix, leading to the formation of focal adhesion complexes, activation of PTK2/FAK and of the downstream kinases MAPK1/ERK2 and MAPK3/ERK1, and ultimately to the stimulation of sprouting angiogenesis. Mediates blood vessel maturation/stability. Implicated in endothelial developmental processes later and distinct from that of VEGF. Appears to play a crucial role in mediating reciprocal interactions between the endothelium and surrounding matrix and mesenchyme. The polypeptide is Angiopoietin-1 (ANGPT1) (Homo sapiens (Human)).